Reading from the N-terminus, the 316-residue chain is L-lactate dehydrogenase (316 aa).

NAD(+)-binding positions include Met-14, 14 to 150 (MIGG…IIGL), Ile-15, Asp-35, Tyr-67, Gly-81, Phe-82, Val-125, Asn-127, and Leu-150. A substrate-binding site is contributed by Arg-95. Substrate contacts are provided by Arg-158 and His-182. Residue His-182 is the Proton acceptor of the active site.

The protein belongs to the LDH/MDH superfamily. LDH family. As to quaternary structure, homotetramer.

The enzyme catalyses (S)-lactate + NAD(+) = pyruvate + NADH + H(+). It functions in the pathway fermentation; pyruvate fermentation to lactate; (S)-lactate from pyruvate: step 1/1. The protein is L-lactate dehydrogenase of Plasmodium falciparum (isolate CDC / Honduras).